The following is a 591-amino-acid chain: Peroxisome assembly protein 2 (591 aa).

The tract at residues 1 to 78 is disordered; sequence MSDSDPKPTA…TNIDTNNNTN (78 aa). The Peroxisomal matrix segment spans residues 1-148; that stretch reads MSDSDPKPTA…TSREGTRPAF (148 aa). The segment covering 7–26 has biased composition (low complexity); that stretch reads KPTAAKGAAPTSIPNSTRNP. Residues 27 to 54 are compositionally biased toward pro residues; that stretch reads NPTPPNPNPNPNPISTPAPTPTATPSPP. The span at 55–78 shows a compositional bias: low complexity; sequence IASSSNNGNNSTRSTNIDTNNNTN. Residues 149-175 traverse the membrane as a helical segment; that stretch reads RVGQVDAELLDEELVELLRGQVREALR. Residues 176–196 lie on the Cytoplasmic side of the membrane; that stretch reads YVGGGGGGGGGGGGGGVGSGV. Residues 197–222 form a helical membrane-spanning segment; sequence AQDWEAEISLALRAVLFKLTVWDHDA. At 223-246 the chain is on the peroxisomal matrix side; that stretch reads TYGAALQNLKYTDARRDGPALAPP. A helical membrane pass occupies residues 247-273; the sequence is SRWQKALYGLVTVGGRYLWAKWEDWLL. The Cytoplasmic portion of the chain corresponds to 274–283; sequence EQDDGFEGPS. A helical transmembrane segment spans residues 284–314; the sequence is PRVKRLARWTSALSTLHASAALVSFLVFLLH. The Peroxisomal matrix segment spans residues 315 to 341; the sequence is GRYRTLLDRLLRMRLAPPTSQVSREVS. Residues 342 to 365 form a helical membrane-spanning segment; it reads FEYLNRQLVWHAFTEFLLFVLPLV. The Cytoplasmic portion of the chain corresponds to 366 to 591; sequence GINRWRRWLA…EDGLDEDPES (226 aa). The Zn(2+) site is built by Cys408, Cys411, Cys449, Cys451, Cys454, Cys457, Cys472, and Cys475. The segment at 408–475 adopts an RING-type; atypical zinc-finger fold; it reads CAICYRDQNS…EGEGWPCLRC (68 aa). A disordered region spans residues 512–591; the sequence is KAPSDHEEEE…EDGLDEDPES (80 aa). 2 stretches are compositionally biased toward acidic residues: residues 517–537 and 575–591; these read HEEEENEEEEEQQGELGENEG and SEDYEAEEDGLDEDPES.

Belongs to the pex2/pex10/pex12 family. In terms of assembly, component of the PEX2-PEX10-PEX12 retrotranslocation channel, composed of PEX2, PEX10 and PEX12.

The protein localises to the peroxisome membrane. The enzyme catalyses [E2 ubiquitin-conjugating enzyme]-S-ubiquitinyl-L-cysteine + [acceptor protein]-L-cysteine = [E2 ubiquitin-conjugating enzyme]-L-cysteine + [acceptor protein]-S-ubiquitinyl-L-cysteine.. The protein operates within protein modification; protein ubiquitination. E3 ubiquitin-protein ligase component of a retrotranslocation channel required for peroxisome organization by mediating export of the PEX5 receptor from peroxisomes to the cytosol, thereby promoting PEX5 recycling. The retrotranslocation channel is composed of PEX2, PEX10 and PEX12; each subunit contributing transmembrane segments that coassemble into an open channel that specifically allows the passage of PEX5 through the peroxisomal membrane. PEX2 also regulates peroxisome organization by acting as a E3 ubiquitin-protein ligase. PEX2 ubiquitinates PEX5 during its passage through the retrotranslocation channel: catalyzes monoubiquitination of PEX5 at 'Cys-6', a modification that acts as a signal for PEX5 extraction into the cytosol. This Thermothelomyces thermophilus (strain ATCC 42464 / BCRC 31852 / DSM 1799) (Sporotrichum thermophile) protein is Peroxisome assembly protein 2.